The sequence spans 438 residues: Protein DJ-1 homolog B (438 aa).

A chloroplast-targeting transit peptide spans 1–45 (MASSSLCHRYFNKITVTPFFNTKKLHHYSPRRISLRVNRRSFSIS). PfpI endopeptidase domains lie at 53-220 (KKVL…EQLL) and 258-424 (PQIL…EKFY).

This sequence belongs to the peptidase C56 family. As to quaternary structure, homodimer.

The protein localises to the plastid. It localises to the chloroplast. Its function is as follows. May be involved in oxidative stress response. The protein is Protein DJ-1 homolog B (DJ1B) of Arabidopsis thaliana (Mouse-ear cress).